Consider the following 727-residue polypeptide: Glucans biosynthesis glucosyltransferase H (727 aa).

The segment at 18-41 (SAMPNERPGAMEPQKLSKMPEGFP) is disordered. A run of 7 helical transmembrane segments spans residues 58–78 (FLVV…MGAV), 97–117 (VNFC…LILL), 278–298 (LQQF…GWWV), 408–428 (IMAY…LMLA), 460–480 (LFYI…LLLL), 496–516 (IFSV…MMFI), and 572–592 (LLAW…ISAW).

The protein belongs to the glycosyltransferase 2 family. OpgH subfamily.

The protein resides in the cell inner membrane. The protein operates within glycan metabolism; osmoregulated periplasmic glucan (OPG) biosynthesis. Involved in the biosynthesis of osmoregulated periplasmic glucans (OPGs). The polypeptide is Glucans biosynthesis glucosyltransferase H (Shewanella baltica (strain OS155 / ATCC BAA-1091)).